The primary structure comprises 161 residues: 2-C-methyl-D-erythritol 2,4-cyclodiphosphate synthase (161 aa).

Asp-9 and His-11 together coordinate a divalent metal cation. Residues 9–11 and 37–38 each bind 4-CDP-2-C-methyl-D-erythritol 2-phosphate; these read DFH and HS. His-45 lines the a divalent metal cation pocket. 4-CDP-2-C-methyl-D-erythritol 2-phosphate is bound by residues 59 to 61, 64 to 68, 135 to 138, and Arg-145; these read DIG, FPDTD, and TTTE.

This sequence belongs to the IspF family. As to quaternary structure, homotrimer. A divalent metal cation serves as cofactor.

The enzyme catalyses 4-CDP-2-C-methyl-D-erythritol 2-phosphate = 2-C-methyl-D-erythritol 2,4-cyclic diphosphate + CMP. It functions in the pathway isoprenoid biosynthesis; isopentenyl diphosphate biosynthesis via DXP pathway; isopentenyl diphosphate from 1-deoxy-D-xylulose 5-phosphate: step 4/6. Its function is as follows. Involved in the biosynthesis of isopentenyl diphosphate (IPP) and dimethylallyl diphosphate (DMAPP), two major building blocks of isoprenoid compounds. Catalyzes the conversion of 4-diphosphocytidyl-2-C-methyl-D-erythritol 2-phosphate (CDP-ME2P) to 2-C-methyl-D-erythritol 2,4-cyclodiphosphate (ME-CPP) with a corresponding release of cytidine 5-monophosphate (CMP). The protein is 2-C-methyl-D-erythritol 2,4-cyclodiphosphate synthase of Leptospira interrogans serogroup Icterohaemorrhagiae serovar Lai (strain 56601).